Reading from the N-terminus, the 960-residue chain is Phosphoenolpyruvate carboxylase 3 (960 aa).

Serine 8 carries the phosphoserine modification. Catalysis depends on residues histidine 167 and lysine 597.

The protein belongs to the PEPCase type 1 family. Homotetramer. Requires Mg(2+) as cofactor.

The protein resides in the cytoplasm. It carries out the reaction oxaloacetate + phosphate = phosphoenolpyruvate + hydrogencarbonate. Its pathway is photosynthesis; C4 acid pathway. Its activity is regulated as follows. By light-reversible phosphorylation. Its function is as follows. Through the carboxylation of phosphoenolpyruvate (PEP) it forms oxaloacetate, a four-carbon dicarboxylic acid source for the tricarboxylic acid cycle. The polypeptide is Phosphoenolpyruvate carboxylase 3 (Sorghum bicolor (Sorghum)).